The chain runs to 441 residues: Tubulin beta-1 chain (441 aa).

8 residues coordinate GTP: Q11, E69, S138, G142, T143, G144, N204, and N226. E69 lines the Mg(2+) pocket.

It belongs to the tubulin family. As to quaternary structure, dimer of alpha and beta chains. A typical microtubule is a hollow water-filled tube with an outer diameter of 25 nm and an inner diameter of 15 nM. Alpha-beta heterodimers associate head-to-tail to form protofilaments running lengthwise along the microtubule wall with the beta-tubulin subunit facing the microtubule plus end conferring a structural polarity. Microtubules usually have 13 protofilaments but different protofilament numbers can be found in some organisms and specialized cells. The cofactor is Mg(2+). In terms of tissue distribution, expressed primarily in touch receptor neurons.

It is found in the cytoplasm. The protein localises to the cytoskeleton. Its function is as follows. Tubulin is the major constituent of microtubules, a cylinder consisting of laterally associated linear protofilaments composed of alpha- and beta-tubulin heterodimers. Microtubules grow by the addition of GTP-tubulin dimers to the microtubule end, where a stabilizing cap forms. Below the cap, tubulin dimers are in GDP-bound state, owing to GTPase activity of alpha-tubulin. Plays a role in mechanosensory transduction (touch sensitivity). In terms of biological role, mec-7 beta-tubulin is required for the production of 15-protofilament microtubules. The polypeptide is Tubulin beta-1 chain (mec-7) (Caenorhabditis briggsae).